Here is a 370-residue protein sequence, read N- to C-terminus: Mitogen-activated protein kinase mpkC (370 aa).

The Protein kinase domain occupies tyrosine 19–leucine 298. ATP is bound by residues valine 25–valine 33 and lysine 48. Aspartate 140 serves as the catalytic Proton acceptor. Threonine 170 carries the phosphothreonine modification. The short motif at threonine 170–tyrosine 172 is the TXY element. Tyrosine 172 carries the post-translational modification Phosphotyrosine.

Belongs to the protein kinase superfamily. Ser/Thr protein kinase family. MAP kinase subfamily. HOG1 sub-subfamily. Requires Mg(2+) as cofactor. Dually phosphorylated on Thr-170 and Tyr-172, which activates the enzyme.

It carries out the reaction L-seryl-[protein] + ATP = O-phospho-L-seryl-[protein] + ADP + H(+). The enzyme catalyses L-threonyl-[protein] + ATP = O-phospho-L-threonyl-[protein] + ADP + H(+). With respect to regulation, activated by tyrosine and threonine phosphorylation. Mitogen-activated protein kinase required for growth on media where sorbitol or mannitol is the sole carbon source. The protein is Mitogen-activated protein kinase mpkC (mpkC) of Aspergillus terreus (strain NIH 2624 / FGSC A1156).